Here is a 129-residue protein sequence, read N- to C-terminus: Large ribosomal subunit protein uL14m (129 aa).

The protein belongs to the universal ribosomal protein uL14 family.

The protein resides in the mitochondrion. This is Large ribosomal subunit protein uL14m (RPL14) from Acanthamoeba castellanii (Amoeba).